A 241-amino-acid chain; its full sequence is Phosphatidylcholine synthase (241 aa).

The Cytoplasmic segment spans residues 1–15; sequence MKFFNYRRVPYAEIR. A helical transmembrane segment spans residues 16–36; that stretch reads AFSVHILTASGSFLAFLGVVA. The Periplasmic segment spans residues 37-41; it reads AAEHR. A helical transmembrane segment spans residues 42–62; that stretch reads FVDMFWWLGLALLVDGIDGPI. The Cytoplasmic portion of the chain corresponds to 63–76; that stretch reads ARKVQVKEVLPNWS. A helical membrane pass occupies residues 77–97; that stretch reads GDTLDNVIDYVTYVLLPAFAL. Residues 98–100 are Periplasmic-facing; the sequence is YQS. A helical membrane pass occupies residues 101 to 121; sequence GMIGEPWSFVAAGAIVVSSAI. The Cytoplasmic segment spans residues 122–133; the sequence is YYADMGMKTDEY. The helical transmembrane segment at 134–154 threads the bilayer; the sequence is FFSGFPVVWNMVVFTLFVIQA. The Periplasmic portion of the chain corresponds to 155–156; sequence SE. Residues 157-177 traverse the membrane as a helical segment; sequence VTASIVVFLSVILTFLPINFL. Over 178 to 187 the chain is Cytoplasmic; it reads HPVRVKRLRP. The helical transmembrane segment at 188–208 threads the bilayer; sequence LNLGIFLVWSVLGMYALLLHF. Topologically, residues 209–211 are periplasmic; that stretch reads ETP. Residues 212-232 traverse the membrane as a helical segment; that stretch reads PWVVVGVVATGLYLYVIGFIL. The Cytoplasmic segment spans residues 233–241; sequence QIFPKLGRA.

Belongs to the CDP-alcohol phosphatidyltransferase class-I family. Mn(2+) serves as cofactor.

It localises to the cell inner membrane. It catalyses the reaction a CDP-1,2-diacyl-sn-glycerol + choline = a 1,2-diacyl-sn-glycero-3-phosphocholine + CMP + H(+). Activated by CDP-diacylglycerol especially in the presence of Triton X-100 (0.1% w/v) at concentrations where micelles are formed. Maximal activation by Triton X-100 at 0.2% w/v, but higher concentrations become inhibitory. Inhibited by EDTA and high concentrations of choline. In terms of biological role, condenses choline with CDP-diglyceride to produce phosphatidylcholine and CMP. The protein is Phosphatidylcholine synthase (pcs) of Rhizobium meliloti (strain 1021) (Ensifer meliloti).